Reading from the N-terminus, the 92-residue chain is Small ribosomal subunit protein uS19 (92 aa).

This sequence belongs to the universal ribosomal protein uS19 family.

Functionally, protein S19 forms a complex with S13 that binds strongly to the 16S ribosomal RNA. The sequence is that of Small ribosomal subunit protein uS19 (rpsS) from Synechocystis sp. (strain ATCC 27184 / PCC 6803 / Kazusa).